Consider the following 91-residue polypeptide: Small ribosomal subunit protein uS19 (91 aa).

The protein belongs to the universal ribosomal protein uS19 family.

In terms of biological role, protein S19 forms a complex with S13 that binds strongly to the 16S ribosomal RNA. The sequence is that of Small ribosomal subunit protein uS19 from Synechococcus sp. (strain CC9605).